The chain runs to 539 residues: 2,3-bisphosphoglycerate-independent phosphoglycerate mutase (539 aa).

Mn(2+) contacts are provided by aspartate 37 and serine 86. Residue serine 86 is part of the active site. Residues histidine 147, arginine 177–aspartate 178, arginine 210, arginine 216, arginine 284–arginine 287, and lysine 359 each bind substrate. Residues aspartate 426, histidine 430, aspartate 467, histidine 468, and histidine 485 each coordinate Mn(2+).

This sequence belongs to the BPG-independent phosphoglycerate mutase family. It depends on Mg(2+) as a cofactor. Mn(2+) serves as cofactor. Expressed ubiquitously. High expression levels in the nerve ring region, intestine and body wall muscles.

The enzyme catalyses (2R)-2-phosphoglycerate = (2R)-3-phosphoglycerate. It functions in the pathway carbohydrate degradation; glycolysis; pyruvate from D-glyceraldehyde 3-phosphate: step 3/5. Its activity is regulated as follows. Activity is not affected by 2,3-bisphosphoglycerate. Its function is as follows. Catalyzes the interconversion of 2-phosphoglycerate and 3-phosphoglycerate. This Caenorhabditis elegans protein is 2,3-bisphosphoglycerate-independent phosphoglycerate mutase.